A 249-amino-acid chain; its full sequence is Fasciclin-like arabinogalactan protein 12 (249 aa).

The N-terminal stretch at 1–24 (MEHSLIILLFTVLLLLTTTPGILS) is a signal peptide. One can recognise an FAS1 domain in the interval 37–181 (PTNVTKILEK…LAVYQVDKVL (145 aa)). Asparagine 39, asparagine 71, asparagine 143, asparagine 152, and asparagine 159 each carry an N-linked (GlcNAc...) asparagine glycan. The segment at 186-219 (VFDPRPPAPAPAPSVSKSKKKKDDSDSSSDDSPA) is disordered. Residue aspartate 220 is the site of GPI-anchor amidated aspartate attachment. The propeptide at 221–249 (ASFALRNVGSVCDAVSFCVMSVMLAWFYL) is removed in mature form.

Belongs to the fasciclin-like AGP family.

It is found in the cell membrane. May be a cell surface adhesion protein. This chain is Fasciclin-like arabinogalactan protein 12 (FLA12), found in Arabidopsis thaliana (Mouse-ear cress).